The primary structure comprises 427 residues: 3-phosphoshikimate 1-carboxyvinyltransferase (427 aa).

3-phosphoshikimate is bound by residues Lys20, Ser21, and Arg25. Residue Lys20 coordinates phosphoenolpyruvate. Phosphoenolpyruvate is bound by residues Gly92 and Arg120. Residues Ser166, Gln168, Asp312, and Lys339 each contribute to the 3-phosphoshikimate site. Position 168 (Gln168) interacts with phosphoenolpyruvate. Asp312 functions as the Proton acceptor in the catalytic mechanism. Phosphoenolpyruvate is bound by residues Arg343 and Arg385.

This sequence belongs to the EPSP synthase family. Monomer.

Its subcellular location is the cytoplasm. The catalysed reaction is 3-phosphoshikimate + phosphoenolpyruvate = 5-O-(1-carboxyvinyl)-3-phosphoshikimate + phosphate. The protein operates within metabolic intermediate biosynthesis; chorismate biosynthesis; chorismate from D-erythrose 4-phosphate and phosphoenolpyruvate: step 6/7. Its function is as follows. Catalyzes the transfer of the enolpyruvyl moiety of phosphoenolpyruvate (PEP) to the 5-hydroxyl of shikimate-3-phosphate (S3P) to produce enolpyruvyl shikimate-3-phosphate and inorganic phosphate. This Streptococcus equi subsp. zooepidemicus (strain MGCS10565) protein is 3-phosphoshikimate 1-carboxyvinyltransferase.